A 230-amino-acid polypeptide reads, in one-letter code: Phosphoribosylaminoimidazole-succinocarboxamide synthase (230 aa).

It belongs to the SAICAR synthetase family.

The catalysed reaction is 5-amino-1-(5-phospho-D-ribosyl)imidazole-4-carboxylate + L-aspartate + ATP = (2S)-2-[5-amino-1-(5-phospho-beta-D-ribosyl)imidazole-4-carboxamido]succinate + ADP + phosphate + 2 H(+). The protein operates within purine metabolism; IMP biosynthesis via de novo pathway; 5-amino-1-(5-phospho-D-ribosyl)imidazole-4-carboxamide from 5-amino-1-(5-phospho-D-ribosyl)imidazole-4-carboxylate: step 1/2. The sequence is that of Phosphoribosylaminoimidazole-succinocarboxamide synthase (purC) from Thermotoga maritima (strain ATCC 43589 / DSM 3109 / JCM 10099 / NBRC 100826 / MSB8).